A 177-amino-acid polypeptide reads, in one-letter code: NADH-quinone oxidoreductase subunit B (177 aa).

[4Fe-4S] cluster contacts are provided by Cys-56, Cys-57, Cys-121, and Cys-151.

It belongs to the complex I 20 kDa subunit family. NDH-1 is composed of 14 different subunits. Subunits NuoB, C, D, E, F, and G constitute the peripheral sector of the complex. Requires [4Fe-4S] cluster as cofactor.

It localises to the cell inner membrane. It carries out the reaction a quinone + NADH + 5 H(+)(in) = a quinol + NAD(+) + 4 H(+)(out). Its function is as follows. NDH-1 shuttles electrons from NADH, via FMN and iron-sulfur (Fe-S) centers, to quinones in the respiratory chain. Couples the redox reaction to proton translocation (for every two electrons transferred, four hydrogen ions are translocated across the cytoplasmic membrane), and thus conserves the redox energy in a proton gradient. In Sphingopyxis alaskensis (strain DSM 13593 / LMG 18877 / RB2256) (Sphingomonas alaskensis), this protein is NADH-quinone oxidoreductase subunit B.